Reading from the N-terminus, the 170-residue chain is Putative pre-16S rRNA nuclease (170 aa).

Residues 1–18 (MGTDDRLPDRPGADDPGR) show a composition bias toward basic and acidic residues. The tract at residues 1-22 (MGTDDRLPDRPGADDPGRGRRI) is disordered.

Belongs to the YqgF nuclease family.

It localises to the cytoplasm. In terms of biological role, could be a nuclease involved in processing of the 5'-end of pre-16S rRNA. This is Putative pre-16S rRNA nuclease from Mycolicibacterium smegmatis (strain ATCC 700084 / mc(2)155) (Mycobacterium smegmatis).